Here is a 309-residue protein sequence, read N- to C-terminus: Zinc finger CCCH domain-containing protein 31 (309 aa).

Residues 1–36 (MEGAGAARKRSRPDTANGGAAGGKRSRETESFQTGL) form a disordered region. 2 consecutive C3H1-type zinc fingers follow at residues 37–65 (SSKLKPCTKFFSTIGCPFGEGCHFSHFVP) and 103–131 (SGKTRMCTKYNTAEGCKFGDKCHFAHGER). The disordered stretch occupies residues 86–106 (ARAPMDHAAGGNSHPASSGKT). The 65-residue stretch at 175-239 (SATAKISVDA…DQIKQASNMV (65 aa)) folds into the KH domain. Residues 249–273 (STPAKKPAGSAAGAAPAGRGGPGGR) are disordered. The segment covering 251–265 (PAKKPAGSAAGAAPA) has biased composition (low complexity). The segment at 275-302 (NYKTKLCENFVKGTCTFGDRCHFAHGEN) adopts a C3H1-type 3 zinc-finger fold.

This Oryza sativa subsp. japonica (Rice) protein is Zinc finger CCCH domain-containing protein 31.